A 420-amino-acid polypeptide reads, in one-letter code: UDP-N-acetylglucosamine 1-carboxyvinyltransferase (420 aa).

A phosphoenolpyruvate-binding site is contributed by 22-23 (KN). Arg-92 is a binding site for UDP-N-acetyl-alpha-D-glucosamine. Residue Cys-116 is the Proton donor of the active site. 2-(S-cysteinyl)pyruvic acid O-phosphothioketal is present on Cys-116. UDP-N-acetyl-alpha-D-glucosamine-binding positions include 121–125 (RPVDQ), Asp-304, and Ile-326.

Belongs to the EPSP synthase family. MurA subfamily.

The protein localises to the cytoplasm. The enzyme catalyses phosphoenolpyruvate + UDP-N-acetyl-alpha-D-glucosamine = UDP-N-acetyl-3-O-(1-carboxyvinyl)-alpha-D-glucosamine + phosphate. Its pathway is cell wall biogenesis; peptidoglycan biosynthesis. Its function is as follows. Cell wall formation. Adds enolpyruvyl to UDP-N-acetylglucosamine. The sequence is that of UDP-N-acetylglucosamine 1-carboxyvinyltransferase from Paraburkholderia xenovorans (strain LB400).